A 168-amino-acid polypeptide reads, in one-letter code: Fusion protein P6 (168 aa).

The next 4 membrane-spanning stretches (helical) occupy residues isoleucine 29–phenylalanine 49, alanine 52–leucine 72, phenylalanine 94–alanine 114, and alanine 143–serine 163.

Interacts with P3.

It is found in the virion membrane. Functionally, mediates the fusion with the host outer membrane during virus entry into the host cell. The chain is Fusion protein P6 (P6) from Pseudomonas savastanoi pv. phaseolicola (Pseudomonas syringae pv. phaseolicola).